An 84-amino-acid chain; its full sequence is Small ribosomal subunit protein uS17 (84 aa).

This sequence belongs to the universal ribosomal protein uS17 family. Part of the 30S ribosomal subunit.

Its function is as follows. One of the primary rRNA binding proteins, it binds specifically to the 5'-end of 16S ribosomal RNA. This Enterobacter sp. (strain 638) protein is Small ribosomal subunit protein uS17.